Here is a 468-residue protein sequence, read N- to C-terminus: Squamosa promoter-binding-like protein 5 (468 aa).

The SBP-type zinc finger occupies proline 204–proline 281. Positions 207, 212, 229, 232, 248, 251, 255, and 267 each coordinate Zn(2+). Residues lysine 264–lysine 280 carry the Bipartite nuclear localization signal motif. 3 disordered regions span residues arginine 270–isoleucine 305, threonine 354–leucine 374, and histidine 405–asparagine 458. A compositionally biased stretch (acidic residues) spans glutamine 363 to glycine 372. Residues asparagine 438–asparagine 458 show a composition bias toward low complexity.

In terms of tissue distribution, ubiquitous.

The protein resides in the nucleus. In terms of biological role, trans-acting factor that binds specifically to the consensus nucleotide sequence 5'-TNCGTACAA-3'. The sequence is that of Squamosa promoter-binding-like protein 5 (SPL5) from Oryza sativa subsp. japonica (Rice).